A 359-amino-acid chain; its full sequence is DNA-directed RNA polymerase RPB3-11 homolog (359 aa).

The protein in the N-terminal section; belongs to the archaeal RpoD/eukaryotic RPB3 RNA polymerase subunit family. It in the C-terminal section; belongs to the archaeal RpoL/eukaryotic RPB11/RPC19 RNA polymerase subunit family. As to quaternary structure, part of the viral DNA-directed RNA polymerase that consists of 8 polII-like subunits (RPB1, RPB2, RPB3, RPB5, RPB6, RPB7, RPB9, RPB10), a capping enzyme and a termination factor.

It is found in the host cytoplasm. Its subcellular location is the virion. Its function is as follows. Component of the DNA-directed RNA polymerase (RNAP) that catalyzes the transcription in the cytoplasm of viral DNA into RNA using the four ribonucleoside triphosphates as substrates. This chain is DNA-directed RNA polymerase RPB3-11 homolog, found in Ornithodoros (relapsing fever ticks).